Consider the following 800-residue polypeptide: Mitochondrial intermediate peptidase (800 aa).

The N-terminal 23 residues, 1 to 23, are a transit peptide targeting the mitochondrion; the sequence is MAGHMLMPLRRRPWTCRACLQRL. The span at 27-41 shows a compositional bias: polar residues; it reads RRSLETAASPSSQSD. Residues 27–59 form a disordered region; the sequence is RRSLETAASPSSQSDVYDYAPTNHSTQKKSNDE. H563 contributes to the Zn(2+) binding site. Residue E564 is part of the active site. H567 and H570 together coordinate Zn(2+).

It belongs to the peptidase M3 family. Requires Zn(2+) as cofactor.

It localises to the mitochondrion matrix. The catalysed reaction is Release of an N-terminal octapeptide as second stage of processing of some proteins imported into the mitochondrion.. Cleaves proteins, imported into the mitochondrion, to their mature size. While most mitochondrial precursor proteins are processed to the mature form in one step by mitochondrial processing peptidase (MPP), the sequential cleavage by MIP of an octapeptide after initial processing by MPP is a required step for a subgroup of nuclear-encoded precursor proteins destined for the matrix or the inner membrane. The chain is Mitochondrial intermediate peptidase (oct1) from Aspergillus oryzae (strain ATCC 42149 / RIB 40) (Yellow koji mold).